A 615-amino-acid chain; its full sequence is Delta-like protein B (615 aa).

An N-terminal signal peptide occupies residues 1 to 20 (MAHLSLYCLLSVSLLQLVAS). Residues 21–522 (SGVFELKVHS…VGQTSPSAVA (502 aa)) lie on the Extracellular side of the membrane. The DSL domain maps to 159–203 (VFCDEFYFGEACSDYCRPRDDTLGHYTCDENGNKECLVGWQGDYC). 26 disulfide bridges follow: Cys161/Cys170, Cys174/Cys186, Cys194/Cys203, Cys208/Cys219, Cys212/Cys225, Cys227/Cys236, Cys245/Cys250, Cys258/Cys267, Cys274/Cys286, Cys280/Cys296, Cys298/Cys307, Cys314/Cys325, Cys319/Cys334, Cys336/Cys345, Cys352/Cys363, Cys357/Cys373, Cys375/Cys384, Cys391/Cys402, Cys396/Cys411, Cys413/Cys422, Cys429/Cys440, Cys434/Cys449, Cys451/Cys460, Cys467/Cys478, Cys472/Cys487, and Cys489/Cys498. EGF-like domains lie at 204 to 237 (SDPI…PSCS), 241 to 268 (HYPG…LFCN), and 270 to 308 (DLNY…TNCE). Residues 310–346 (EINECDCNPCKNGGSCNDLENDYSCTCPQGFYGKNCE) form the EGF-like 4; calcium-binding domain. EGF-like domains lie at 348–385 (IAMT…SNCE) and 387–423 (RLDR…SRCE). The 37-residue stretch at 425–461 (NIDDCARYPCQNAGTCQDGINDYTCTCTLGFTGKNCS) folds into the EGF-like 7; calcium-binding domain. Residue Asn459 is glycosylated (N-linked (GlcNAc...) asparagine). The EGF-like 8 domain maps to 463 to 499 (RADACLTNPCLHGGTCFTHFSGPVCQCVPGFMGSTCE). Residues 523 to 543 (VSCVLGVLAVFLGVCVGLVVL) form a helical membrane-spanning segment. At 544 to 615 (RRRRHRLRRQ…FLWSAGGGLR (72 aa)) the chain is on the cytoplasmic side.

In terms of processing, ubiquitinated by mib, leading to its endocytosis and subsequent degradation.

It localises to the membrane. Its function is as follows. Acts as a ligand for Notch receptors and is involved in primary neurogenesis. Can activate Notch receptors, thereby playing a key role in lateral inhibition, a process that prevents the immediate neighbors of each nascent neural cell from simultaneously embarking on neural differentiation. This Danio rerio (Zebrafish) protein is Delta-like protein B (dlb).